The following is an 835-amino-acid chain: Phenylalanine--tRNA ligase beta subunit (835 aa).

Positions 44-158 (GPVDGPLTVG…LPGADGADVL (115 aa)) constitute a tRNA-binding domain. Residues 414–493 (WSLPPIRIAV…RLEGLEVIRS (80 aa)) enclose the B5 domain. Mg(2+) is bound by residues aspartate 471, aspartate 477, glutamate 480, and glutamate 481. The FDX-ACB domain maps to 741-834 (SPFPAVLQDV…AAERVGATLR (94 aa)).

This sequence belongs to the phenylalanyl-tRNA synthetase beta subunit family. Type 1 subfamily. In terms of assembly, tetramer of two alpha and two beta subunits. It depends on Mg(2+) as a cofactor.

It is found in the cytoplasm. The enzyme catalyses tRNA(Phe) + L-phenylalanine + ATP = L-phenylalanyl-tRNA(Phe) + AMP + diphosphate + H(+). This chain is Phenylalanine--tRNA ligase beta subunit, found in Mycobacterium leprae (strain TN).